The sequence spans 289 residues: ATP synthase gamma chain (289 aa).

The protein belongs to the ATPase gamma chain family. As to quaternary structure, F-type ATPases have 2 components, CF(1) - the catalytic core - and CF(0) - the membrane proton channel. CF(1) has five subunits: alpha(3), beta(3), gamma(1), delta(1), epsilon(1). CF(0) has three main subunits: a, b and c.

The protein localises to the cell inner membrane. Its function is as follows. Produces ATP from ADP in the presence of a proton gradient across the membrane. The gamma chain is believed to be important in regulating ATPase activity and the flow of protons through the CF(0) complex. This chain is ATP synthase gamma chain, found in Janthinobacterium sp. (strain Marseille) (Minibacterium massiliensis).